The chain runs to 302 residues: 4-hydroxy-tetrahydrodipicolinate synthase (302 aa).

Thr50 lines the pyruvate pocket. Tyr138 serves as the catalytic Proton donor/acceptor. The active-site Schiff-base intermediate with substrate is Lys167. Val209 lines the pyruvate pocket.

Belongs to the DapA family. As to quaternary structure, homotetramer; dimer of dimers.

Its subcellular location is the cytoplasm. The catalysed reaction is L-aspartate 4-semialdehyde + pyruvate = (2S,4S)-4-hydroxy-2,3,4,5-tetrahydrodipicolinate + H2O + H(+). It participates in amino-acid biosynthesis; L-lysine biosynthesis via DAP pathway; (S)-tetrahydrodipicolinate from L-aspartate: step 3/4. Catalyzes the condensation of (S)-aspartate-beta-semialdehyde [(S)-ASA] and pyruvate to 4-hydroxy-tetrahydrodipicolinate (HTPA). The chain is 4-hydroxy-tetrahydrodipicolinate synthase from Salinibacter ruber (strain DSM 13855 / M31).